The primary structure comprises 542 residues: Probable quinate permease (542 aa).

Residues 1 to 22 lie on the Cytoplasmic side of the membrane; sequence MSILALVEDRPTPKEVYNWKIY. The helical transmembrane segment at 23–43 threads the bilayer; the sequence is LLAAVASFTSCMIGYDSAFIG. The Extracellular portion of the chain corresponds to 44–74; sequence TTLALSSFREEFGFSTMSKTAVNLVSANIVS. A helical membrane pass occupies residues 75 to 95; it reads CYQAGAFFGAFFAYPIGHFWG. At 96 to 97 the chain is on the cytoplasmic side; sequence RK. A helical membrane pass occupies residues 98–118; that stretch reads WGLLFAGTIFTLGAGLMLGAN. At 119–130 the chain is on the extracellular side; that stretch reads GDRGLGLLYGGR. A helical membrane pass occupies residues 131 to 151; the sequence is VLAGLGVGAGSNITPIYISEM. Topologically, residues 152-159 are cytoplasmic; it reads APPSIRGR. The helical transmembrane segment at 160–180 threads the bilayer; the sequence is LVGVYELGWQIGGLVGFWINY. Over 181 to 193 the chain is Extracellular; sequence GVSETLAPSHKQW. A helical membrane pass occupies residues 194 to 214; sequence IIPFAVQLIPSGLLLIGAVFL. Over 215 to 285 the chain is Cytoplasmic; it reads KESPRWLFSR…AGTNKKVMYR (71 aa). Residues 286–306 traverse the membrane as a helical segment; sequence LFLGSMLFFWQNGSGINAINY. Topologically, residues 307–325 are extracellular; sequence YSPTVFKSIGLHGANTSMF. The helical transmembrane segment at 326-346 threads the bilayer; it reads STGIFGVVKTVVTFVWLLYLI. Residues 347-352 lie on the Cytoplasmic side of the membrane; that stretch reads DRVGRR. A helical transmembrane segment spans residues 353 to 373; that stretch reads LLLLIGAAGAAVCLLIVGAYI. Residues 374–387 lie on the Extracellular side of the membrane; sequence KIADPASNPTQEMT. A helical membrane pass occupies residues 388 to 408; that stretch reads GGGIAAMFFFYLYTVFYTPSW. The Cytoplasmic segment spans residues 409-456; that stretch reads NGTPWVMNSEMFEPNMRSLAQACAAASNWLWNFLISRFTPQMFAKMEY. A helical membrane pass occupies residues 457–477; that stretch reads GVWFFFASLMLLSIVFVFFLV. Topologically, residues 478-542 are extracellular; sequence PETKGIPLES…EHVSEDLPKV (65 aa). Residues 523–542 form a disordered region; the sequence is GYSKTGEQQVEHVSEDLPKV. Residues 531–542 show a composition bias toward basic and acidic residues; it reads QVEHVSEDLPKV.

This sequence belongs to the major facilitator superfamily. Sugar transporter (TC 2.A.1.1) family. In terms of assembly, interacts with creB. Ubiquitinated. Deubiquitinated by creB, probably to control its activity or amount.

The protein localises to the cell membrane. Functionally, integral membrane transporter that imports quinic acid to be catabolized as a carbon source. The polypeptide is Probable quinate permease (qutD) (Aspergillus fumigatus (strain ATCC MYA-4609 / CBS 101355 / FGSC A1100 / Af293) (Neosartorya fumigata)).